We begin with the raw amino-acid sequence, 485 residues long: Cysteine--tRNA ligase (485 aa).

Residue Cys27 participates in Zn(2+) binding. Positions 29–39 (ITAYDLCHIGH) match the 'HIGH' region motif. Positions 208, 233, and 237 each coordinate Zn(2+). Positions 265–269 (KMSKS) match the 'KMSKS' region motif. ATP is bound at residue Lys268.

This sequence belongs to the class-I aminoacyl-tRNA synthetase family. Monomer. Zn(2+) is required as a cofactor.

Its subcellular location is the cytoplasm. The enzyme catalyses tRNA(Cys) + L-cysteine + ATP = L-cysteinyl-tRNA(Cys) + AMP + diphosphate. The chain is Cysteine--tRNA ligase from Solidesulfovibrio magneticus (strain ATCC 700980 / DSM 13731 / RS-1) (Desulfovibrio magneticus).